The chain runs to 258 residues: SMH class II histocompatibility antigen, beta-1 chain (258 aa).

The signal sequence occupies residues 1–29 (MMVLPVPVAPWTAALTVLLMVLNKSVVQG). The tract at residues 30–121 (RTTPENYLFR…LNQRLSQSLI (92 aa)) is beta-1. Residues 30-225 (RTTPENYLFR…RAQSDSARNK (196 aa)) are Extracellular-facing. 2 disulfide bridges follow: cysteine 44-cysteine 106 and cysteine 144-cysteine 200. The tract at residues 122–215 (AQPKVHVSPS…SLDRPITVEW (94 aa)) is beta-2. The 89-residue stretch at 124–212 (PKVHVSPSKG…EHPSLDRPIT (89 aa)) folds into the Ig-like C1-type domain. The segment at 216–225 (RAQSDSARNK) is connecting peptide. An N-linked (GlcNAc...) asparagine glycan is attached at asparagine 224. A helical membrane pass occupies residues 226-246 (TLTGVGGLVLGLIFLAVGLIM). Residues 247 to 258 (HVRSKKAQRGSR) lie on the Cytoplasmic side of the membrane.

The protein belongs to the MHC class II family.

The protein resides in the membrane. The chain is SMH class II histocompatibility antigen, beta-1 chain from Spalax ehrenbergi (Middle East blind mole rat).